A 738-amino-acid chain; its full sequence is NAD(P)H-quinone oxidoreductase subunit 5, chloroplastic (738 aa).

17 helical membrane passes run 9–29 (WVIP…LFLI), 39–59 (IWAF…LHLS), 89–109 (VDPL…LVLI), 125–145 (FVYI…SNLI), 147–167 (IYFF…FWFT), 185–205 (GDFG…SLEF), 219–239 (NGIN…GAVA), 258–278 (TPIS…FLLA), 280–300 (LLPL…VGTI), 327–347 (LGYM…FHLI), 354–374 (ALLF…VGYS), 396–416 (TTFL…CFWS), 425–445 (WLYS…TAFY), 542–562 (LFPL…GIPF), 610–630 (SLAI…YSFF), 691–711 (GVID…GEEI), and 717–737 (GRIS…LFFI).

The protein belongs to the complex I subunit 5 family. In terms of assembly, NDH is composed of at least 16 different subunits, 5 of which are encoded in the nucleus.

It is found in the plastid. Its subcellular location is the chloroplast thylakoid membrane. It catalyses the reaction a plastoquinone + NADH + (n+1) H(+)(in) = a plastoquinol + NAD(+) + n H(+)(out). The catalysed reaction is a plastoquinone + NADPH + (n+1) H(+)(in) = a plastoquinol + NADP(+) + n H(+)(out). In terms of biological role, NDH shuttles electrons from NAD(P)H:plastoquinone, via FMN and iron-sulfur (Fe-S) centers, to quinones in the photosynthetic chain and possibly in a chloroplast respiratory chain. The immediate electron acceptor for the enzyme in this species is believed to be plastoquinone. Couples the redox reaction to proton translocation, and thus conserves the redox energy in a proton gradient. The protein is NAD(P)H-quinone oxidoreductase subunit 5, chloroplastic (ndhF) of Saccharum hybrid (Sugarcane).